Consider the following 968-residue polypeptide: Bifunctional glyoxylate cycle protein (968 aa).

Positions 1–443 are isocitrate lyase; it reads MSSAAKNFYQ…AVASQDEEIL (443 aa). The interval 444–968 is malate synthase; the sequence is SLTAQNVAGD…AYDRLVSEGY (525 aa). The active-site Proton acceptor is R601. D881 (proton donor) is an active-site residue.

In the N-terminal section; belongs to the isocitrate lyase/PEP mutase superfamily. Isocitrate lyase family. The protein in the C-terminal section; belongs to the malate synthase family. Intestinal and body wall muscle cells.

The catalysed reaction is D-threo-isocitrate = glyoxylate + succinate. It carries out the reaction glyoxylate + acetyl-CoA + H2O = (S)-malate + CoA + H(+). Its pathway is carbohydrate metabolism; glyoxylate cycle; (S)-malate from isocitrate: step 1/2. It functions in the pathway carbohydrate metabolism; glyoxylate cycle; (S)-malate from isocitrate: step 2/2. In Caenorhabditis elegans, this protein is Bifunctional glyoxylate cycle protein (icl-1).